The primary structure comprises 280 residues: Pantothenate synthetase (280 aa).

30-37 (MGYLHEGH) provides a ligand contact to ATP. The active-site Proton donor is His-37. Position 61 (Gln-61) interacts with (R)-pantoate. Gln-61 is a binding site for beta-alanine. 147-150 (GQKD) contacts ATP. Gln-153 provides a ligand contact to (R)-pantoate. ATP-binding positions include Val-176 and 184–187 (MSSR).

Belongs to the pantothenate synthetase family. Homodimer.

It localises to the cytoplasm. The catalysed reaction is (R)-pantoate + beta-alanine + ATP = (R)-pantothenate + AMP + diphosphate + H(+). It functions in the pathway cofactor biosynthesis; (R)-pantothenate biosynthesis; (R)-pantothenate from (R)-pantoate and beta-alanine: step 1/1. Functionally, catalyzes the condensation of pantoate with beta-alanine in an ATP-dependent reaction via a pantoyl-adenylate intermediate. The protein is Pantothenate synthetase of Thermosipho melanesiensis (strain DSM 12029 / CIP 104789 / BI429).